Here is a 251-residue protein sequence, read N- to C-terminus: Glucosamine-6-phosphate deaminase (251 aa).

Asp73 acts as the Proton acceptor; for enolization step in catalysis. Asn142 (for ring-opening step) is an active-site residue. His144 acts as the Proton acceptor; for ring-opening step in catalysis. Glu149 serves as the catalytic For ring-opening step.

This sequence belongs to the glucosamine/galactosamine-6-phosphate isomerase family. NagB subfamily.

It carries out the reaction alpha-D-glucosamine 6-phosphate + H2O = beta-D-fructose 6-phosphate + NH4(+). Its pathway is amino-sugar metabolism; N-acetylneuraminate degradation; D-fructose 6-phosphate from N-acetylneuraminate: step 5/5. Its function is as follows. Catalyzes the reversible isomerization-deamination of glucosamine 6-phosphate (GlcN6P) to form fructose 6-phosphate (Fru6P) and ammonium ion. The polypeptide is Glucosamine-6-phosphate deaminase (Rhodopirellula baltica (strain DSM 10527 / NCIMB 13988 / SH1)).